We begin with the raw amino-acid sequence, 336 residues long: Heat-inducible transcription repressor HrcA (336 aa).

Belongs to the HrcA family.

In terms of biological role, negative regulator of class I heat shock genes (grpE-dnaK-dnaJ and groELS operons). Prevents heat-shock induction of these operons. This is Heat-inducible transcription repressor HrcA from Variovorax paradoxus (strain S110).